The chain runs to 240 residues: Cysteine-rich venom protein catrin (240 aa).

Residues 1 to 19 (MIAFIVLPILAAVLQQSSG) form the signal peptide. The region spanning 38-166 (VDLHNFLRRS…KYSYFYVCQY (129 aa)) is the SCP domain. 8 disulfide bridges follow: Cys-75-Cys-153, Cys-92-Cys-167, Cys-148-Cys-164, Cys-186-Cys-193, Cys-189-Cys-198, Cys-202-Cys-235, Cys-211-Cys-229, and Cys-220-Cys-233. The ShKT domain maps to 202–235 (CTKEDKYTNCKSLVQQAGCQDKQMQSDCPAICFC).

Belongs to the CRISP family. Expressed by the venom gland.

The protein resides in the secreted. Catrin-2 weakly blocks contraction of smooth muscle elicited by high potassium-induced depolarization, but does not block caffeine-stimulated contraction. Catrin-1 has no significant effect. May target voltage-gated calcium channels on smooth muscle. The chain is Cysteine-rich venom protein catrin from Crotalus atrox (Western diamondback rattlesnake).